A 259-amino-acid chain; its full sequence is Pimeloyl-[acyl-carrier protein] methyl ester esterase (259 aa).

Substrate contacts are provided by residues tryptophan 18, 78–79 (SL), and 139–143 (FLALD). Residue serine 78 is the Nucleophile of the active site. Catalysis depends on residues aspartate 203 and histidine 231. A substrate-binding site is contributed by histidine 231.

It belongs to the AB hydrolase superfamily. Carboxylesterase BioH family. In terms of assembly, monomer.

Its subcellular location is the cytoplasm. The catalysed reaction is 6-carboxyhexanoyl-[ACP] methyl ester + H2O = 6-carboxyhexanoyl-[ACP] + methanol + H(+). Its pathway is cofactor biosynthesis; biotin biosynthesis. Functionally, the physiological role of BioH is to remove the methyl group introduced by BioC when the pimeloyl moiety is complete. It allows to synthesize pimeloyl-ACP via the fatty acid synthetic pathway through the hydrolysis of the ester bonds of pimeloyl-ACP esters. This chain is Pimeloyl-[acyl-carrier protein] methyl ester esterase, found in Stenotrophomonas maltophilia (strain R551-3).